The sequence spans 544 residues: Pentatricopeptide repeat-containing protein At1g66345, mitochondrial (544 aa).

The N-terminal 116 residues, 1–116, are a transit peptide targeting the mitochondrion; sequence MASALRRLVE…RNLRHGIKSY (116 aa). PPR repeat units lie at residues 163–197, 198–232, 233–267, 268–302, 303–337, 338–372, 373–407, 408–442, 443–477, 478–512, and 513–544; these read TPLVFDLLVQCYAKIRYLELGFDVFKRLCDCGFTL, SVITLNTLIHYSSKSKIDDLVWRIYECAIDKRIYP, NEITIRIMIQVLCKEGRLKEVVDLLDRICGKRCLP, SVIVNTSLVFRVLEEMRIEESMSLLKRLLMKNMVV, DTIGYSIVVYAKAKEGDLVSARKVFDEMLQRGFSA, NSFVYTVFVRVCCEKGDVKEAERLLSEMEESGVSP, YDETFNCLIGGFARFGWEEKGLEYCEVMVTRGLMP, SCSAFNEMVKSVSKIENVNRANEILTKSIDKGFVP, DEHTYSHLIRGFIEGNDIDQALKLFYEMEYRKMSP, GFEVFRSLIVGLCTCGKVEAGEKYLKIMKKRLIEP, and NADIYDALIKAFQKIGDKTNADRVYNEMISVR.

This sequence belongs to the PPR family. P subfamily.

The protein resides in the mitochondrion. The sequence is that of Pentatricopeptide repeat-containing protein At1g66345, mitochondrial from Arabidopsis thaliana (Mouse-ear cress).